An 834-amino-acid polypeptide reads, in one-letter code: Serine/threonine-protein kinase TNNI3K (834 aa).

Glycine 2 carries N-myristoyl glycine lipidation. Residues 21-49 adopt a coiled-coil conformation; the sequence is SESYAIIIERLEDDLQIKENEFQELRHIF. ANK repeat units follow at residues 66–96, 100–129, 133–162, 166–195, 199–229, 233–262, 268–297, 303–334, 338–367, and 380–409; these read RGLS…RPSR, NGFP…DVQQ, GGLT…NVNV, VFFT…DVNV, VGDR…DVNA, EDHV…EVQP, YGDT…TESL, FSET…NINH, DGHT…DMNL, and DEQT…PQDE. Residues 462-722 enclose the Protein kinase domain; it reads IEFHEIIGSG…EVVRKLEECL (261 aa). ATP contacts are provided by residues 468-476 and lysine 489; that span reads IGSGSFGKV. The active-site Proton acceptor is the aspartate 587. The segment at 815 to 834 is disordered; sequence PMSPMHLHSRRNSGSFEDGN.

It belongs to the protein kinase superfamily. TKL Ser/Thr protein kinase family. MAP kinase kinase kinase subfamily. In terms of assembly, interacts with TNNI3, ACTC, ACTA1, MYBPC3, AIP, FABP3 and HADHB. Mg(2+) serves as cofactor. Post-translationally, autophosphorylated.

It is found in the nucleus. The protein localises to the cytoplasm. It catalyses the reaction L-seryl-[protein] + ATP = O-phospho-L-seryl-[protein] + ADP + H(+). The enzyme catalyses L-threonyl-[protein] + ATP = O-phospho-L-threonyl-[protein] + ADP + H(+). Functionally, may play a role in cardiac physiology. This chain is Serine/threonine-protein kinase TNNI3K, found in Mus musculus (Mouse).